A 441-amino-acid polypeptide reads, in one-letter code: ATP-dependent protease ATPase subunit HslU (441 aa).

ATP-binding positions include I18, 60–65, D254, E319, and R391; that span reads GVGKTE.

The protein belongs to the ClpX chaperone family. HslU subfamily. A double ring-shaped homohexamer of HslV is capped on each side by a ring-shaped HslU homohexamer. The assembly of the HslU/HslV complex is dependent on binding of ATP.

Its subcellular location is the cytoplasm. Functionally, ATPase subunit of a proteasome-like degradation complex; this subunit has chaperone activity. The binding of ATP and its subsequent hydrolysis by HslU are essential for unfolding of protein substrates subsequently hydrolyzed by HslV. HslU recognizes the N-terminal part of its protein substrates and unfolds these before they are guided to HslV for hydrolysis. The protein is ATP-dependent protease ATPase subunit HslU of Shewanella woodyi (strain ATCC 51908 / MS32).